The sequence spans 394 residues: Lipid-A-disaccharide synthase (394 aa).

It belongs to the LpxB family.

The catalysed reaction is 2-N,3-O-bis[(3R)-3-hydroxytetradecanoyl]-alpha-D-glucosaminyl 1-phosphate + UDP-2-N,3-O-bis[(3R)-3-hydroxytetradecanoyl]-alpha-D-glucosamine = lipid A disaccharide (E. coli) + UDP + H(+). The enzyme catalyses a lipid X + a UDP-2-N,3-O-bis[(3R)-3-hydroxyacyl]-alpha-D-glucosamine = a lipid A disaccharide + UDP + H(+). It participates in glycolipid biosynthesis; lipid IV(A) biosynthesis; lipid IV(A) from (3R)-3-hydroxytetradecanoyl-[acyl-carrier-protein] and UDP-N-acetyl-alpha-D-glucosamine: step 5/6. Its function is as follows. Condensation of UDP-2,3-diacylglucosamine and 2,3-diacylglucosamine-1-phosphate to form lipid A disaccharide, a precursor of lipid A, a phosphorylated glycolipid that anchors the lipopolysaccharide to the outer membrane of the cell. The polypeptide is Lipid-A-disaccharide synthase (Yersinia pestis).